Here is a 357-residue protein sequence, read N- to C-terminus: Glutamine synthetase root isozyme 5 (357 aa).

Residues 19 to 99 (IIAEYIWVGG…VMCDCYTPQG (81 aa)) enclose the GS beta-grasp domain. A GS catalytic domain is found at 106–357 (KRYKAATVFS…ADTTILWKGN (252 aa)).

The protein belongs to the glutamine synthetase family. In terms of assembly, homooctamer. As to expression, found mainly in the cortical tissues of seedling roots, stem and seedling shoot.

Its subcellular location is the cytoplasm. It catalyses the reaction L-glutamate + NH4(+) + ATP = L-glutamine + ADP + phosphate + H(+). Its function is as follows. Plays a role in the flow of nitrogen into nitrogenous organic compounds. This chain is Glutamine synthetase root isozyme 5 (GS1-5), found in Zea mays (Maize).